The sequence spans 142 residues: Large ribosomal subunit protein uL13 (142 aa).

It belongs to the universal ribosomal protein uL13 family. As to quaternary structure, part of the 50S ribosomal subunit.

Its function is as follows. This protein is one of the early assembly proteins of the 50S ribosomal subunit, although it is not seen to bind rRNA by itself. It is important during the early stages of 50S assembly. The polypeptide is Large ribosomal subunit protein uL13 (Pyrococcus horikoshii (strain ATCC 700860 / DSM 12428 / JCM 9974 / NBRC 100139 / OT-3)).